Consider the following 296-residue polypeptide: Phosphatidylserine decarboxylase proenzyme (296 aa).

Catalysis depends on charge relay system; for autoendoproteolytic cleavage activity residues D113, H169, and S256. The Schiff-base intermediate with substrate; via pyruvic acid; for decarboxylase activity role is filled by S256. Residue S256 is modified to Pyruvic acid (Ser); by autocatalysis.

This sequence belongs to the phosphatidylserine decarboxylase family. PSD-B subfamily. Prokaryotic type II sub-subfamily. Heterodimer of a large membrane-associated beta subunit and a small pyruvoyl-containing alpha subunit. Pyruvate is required as a cofactor. In terms of processing, is synthesized initially as an inactive proenzyme. Formation of the active enzyme involves a self-maturation process in which the active site pyruvoyl group is generated from an internal serine residue via an autocatalytic post-translational modification. Two non-identical subunits are generated from the proenzyme in this reaction, and the pyruvate is formed at the N-terminus of the alpha chain, which is derived from the carboxyl end of the proenzyme. The autoendoproteolytic cleavage occurs by a canonical serine protease mechanism, in which the side chain hydroxyl group of the serine supplies its oxygen atom to form the C-terminus of the beta chain, while the remainder of the serine residue undergoes an oxidative deamination to produce ammonia and the pyruvoyl prosthetic group on the alpha chain. During this reaction, the Ser that is part of the protease active site of the proenzyme becomes the pyruvoyl prosthetic group, which constitutes an essential element of the active site of the mature decarboxylase.

It localises to the cell membrane. It carries out the reaction a 1,2-diacyl-sn-glycero-3-phospho-L-serine + H(+) = a 1,2-diacyl-sn-glycero-3-phosphoethanolamine + CO2. The protein operates within phospholipid metabolism; phosphatidylethanolamine biosynthesis; phosphatidylethanolamine from CDP-diacylglycerol: step 2/2. Catalyzes the formation of phosphatidylethanolamine (PtdEtn) from phosphatidylserine (PtdSer). The polypeptide is Phosphatidylserine decarboxylase proenzyme (Clostridium kluyveri (strain ATCC 8527 / DSM 555 / NBRC 12016 / NCIMB 10680 / K1)).